Here is a 166-residue protein sequence, read N- to C-terminus: MNTITGKVWNFGANIDTDVIIAARYLNSSDPEHLAKYVMEDADPEFPKKLKKGDIIVAGENFGCGSSREHAPIALKAAGIAAVVAPSFARIFYRNAFNMGLPIFELPESLEIKEGEEISINLDKGEITNNTTKKTYKFIPIPPFMQELIATGGLINYAKAEMKKAI.

It belongs to the LeuD family. LeuD type 2 subfamily. As to quaternary structure, heterodimer of LeuC and LeuD.

The enzyme catalyses (2R,3S)-3-isopropylmalate = (2S)-2-isopropylmalate. It participates in amino-acid biosynthesis; L-leucine biosynthesis; L-leucine from 3-methyl-2-oxobutanoate: step 2/4. Its function is as follows. Catalyzes the isomerization between 2-isopropylmalate and 3-isopropylmalate, via the formation of 2-isopropylmaleate. This chain is 3-isopropylmalate dehydratase small subunit, found in Aliarcobacter butzleri (strain RM4018) (Arcobacter butzleri).